Here is a 215-residue protein sequence, read N- to C-terminus: Pyridoxine/pyridoxamine 5'-phosphate oxidase (215 aa).

Substrate is bound by residues 9-12 (RRDY) and lysine 69. FMN-binding positions include 64-69 (RILLLK), 79-80 (FT), lysine 86, and glutamine 108. Substrate contacts are provided by tyrosine 126, arginine 130, and serine 134. FMN contacts are provided by residues 143–144 (QS) and tryptophan 188. 194–196 (RLH) contacts substrate. Arginine 198 lines the FMN pocket.

It belongs to the pyridoxamine 5'-phosphate oxidase family. In terms of assembly, homodimer. The cofactor is FMN.

It catalyses the reaction pyridoxamine 5'-phosphate + O2 + H2O = pyridoxal 5'-phosphate + H2O2 + NH4(+). The enzyme catalyses pyridoxine 5'-phosphate + O2 = pyridoxal 5'-phosphate + H2O2. Its pathway is cofactor metabolism; pyridoxal 5'-phosphate salvage; pyridoxal 5'-phosphate from pyridoxamine 5'-phosphate: step 1/1. It participates in cofactor metabolism; pyridoxal 5'-phosphate salvage; pyridoxal 5'-phosphate from pyridoxine 5'-phosphate: step 1/1. Its function is as follows. Catalyzes the oxidation of either pyridoxine 5'-phosphate (PNP) or pyridoxamine 5'-phosphate (PMP) into pyridoxal 5'-phosphate (PLP). The chain is Pyridoxine/pyridoxamine 5'-phosphate oxidase from Pseudomonas fluorescens (strain Pf0-1).